Consider the following 274-residue polypeptide: Diaminopimelate epimerase (274 aa).

Asn-11, Gln-44, and Asn-64 together coordinate substrate. Cys-73 acts as the Proton donor in catalysis. Substrate-binding positions include Gly-74–Asn-75, Asn-157, Asn-190, and Glu-208–Arg-209. Cys-217 acts as the Proton acceptor in catalysis. A substrate-binding site is contributed by Gly-218–Ser-219.

It belongs to the diaminopimelate epimerase family. In terms of assembly, homodimer.

It is found in the cytoplasm. The catalysed reaction is (2S,6S)-2,6-diaminopimelate = meso-2,6-diaminopimelate. Its pathway is amino-acid biosynthesis; L-lysine biosynthesis via DAP pathway; DL-2,6-diaminopimelate from LL-2,6-diaminopimelate: step 1/1. Catalyzes the stereoinversion of LL-2,6-diaminopimelate (L,L-DAP) to meso-diaminopimelate (meso-DAP), a precursor of L-lysine and an essential component of the bacterial peptidoglycan. The sequence is that of Diaminopimelate epimerase from Serratia proteamaculans (strain 568).